The chain runs to 222 residues: DNA ADP-ribosyl transferase (222 aa).

Positions 12 to 209 constitute a DarT domain; it reads TLIYHITHLN…PVRVRRSWYY (198 aa). NAD(+)-binding positions include 16–18, G25, and L33; that span reads HIT. Residues 38–56 form an NAD(+)-binding element region; the sequence is RPPTQQNVAYGHIQAHRAQ. The DNA-binding element occupies 47–53; sequence YGHIQAH. R54 serves as a coordination point for NAD(+). The active-site Proton acceptor is the R54. DNA-binding regions lie at residues 78 to 83, 148 to 151, and 154 to 158; these read RSPMLY, SYWA, and REKKQ. The ADP-ribosylating turn-turn loop stretch occupies residues 119–160; sequence TDRHAAVQYVCFFHKLEHLKALDWQAIQASYWANVREKKQAE. E160 is a catalytic residue.

This sequence belongs to the DarT ADP-ribosyltransferase family. Interacts with cognate antitoxin DarG (via C-terminus); this heterodimeric complex neutralizes the toxic effect of DarT by preventing ssDNA binding to DarT and consequently inactivating the toxin by direct protein-protein interactions.

The catalysed reaction is a thymidine in DNA + NAD(+) = an N-(ADP-alpha-D-ribosyl)-thymidine in DNA + nicotinamide + H(+). Functionally, toxic component of the hybrid type II/IV toxin-antitoxin (TA) system DarTG, which plays a crucial role in controlling bacterial growth and bacteriophage infection. Its toxic effect is neutralized by cognate antitoxin DarG. In case of phage infection, DarT toxin ADP-ribosylates DNA, which inhibits both viral DNA and RNA synthesis and leads to abortive infection. ADP-ribosylates ssDNA on the second thymidine of the consensus sequence 5'-TNTC-3'; the protein does not auto-modify. Has no activity on dsDNA in vitro. This leads to a decrease in DNA replication. Upon expression in E.coli inhibits cell growth, colony formation and induces the SOS response. Expression leads to bacteriostasis; however if cells grow over an hour in the presence of toxin, growth is no longer restored on antitoxin-inducing plates. In E.coli ADP-ribosylates genomic DNA (gDNA), which induces RecA expression (a marker for DNA damage). This is DNA ADP-ribosyl transferase from Thermus aquaticus (strain ATCC BAA-2747 / Y51MC23).